A 99-amino-acid chain; its full sequence is MSEKTIVKKETNVDFKKPKMYKVILLNDDYTTMDFVVEILITVFHKTAADATRIMLDVHRKGKGVVGVYTYDIARSKIALVEKMAAEREFPLAAVMEPE.

Belongs to the ClpS family. As to quaternary structure, binds to the N-terminal domain of the chaperone ClpA.

Functionally, involved in the modulation of the specificity of the ClpAP-mediated ATP-dependent protein degradation. The sequence is that of ATP-dependent Clp protease adapter protein ClpS from Acetivibrio thermocellus (strain ATCC 27405 / DSM 1237 / JCM 9322 / NBRC 103400 / NCIMB 10682 / NRRL B-4536 / VPI 7372) (Clostridium thermocellum).